Reading from the N-terminus, the 151-residue chain is Small ribosomal subunit protein uS11 (151 aa).

Residues D131 to L151 are disordered. Residues R142–L151 show a composition bias toward basic residues.

It belongs to the universal ribosomal protein uS11 family.

This Bombyx mori (Silk moth) protein is Small ribosomal subunit protein uS11.